Consider the following 421-residue polypeptide: Acylglycerol kinase, mitochondrial (421 aa).

Residue lysine 6 is modified to N6-acetyllysine. The hydrophobic stretch occupies residues threonine 15–glycine 31. The 142-residue stretch at alanine 58 to lysine 199 folds into the DAGKc domain. The interval isoleucine 252–arginine 271 is disordered.

The protein belongs to the AGK family. In terms of assembly, component of the TIM22 complex, which core is composed of TIMM22, associated with TIMM10 (TIMM10A and/or TIMM10B), TIMM9, AGK and TIMM29. Interacts with SMIM26. Requires Mg(2+) as cofactor. As to expression, ubiquitously expressed.

Its subcellular location is the mitochondrion inner membrane. It localises to the mitochondrion intermembrane space. It carries out the reaction a monoacylglycerol + ATP = a monoacyl-sn-glycero-3-phosphate + ADP + H(+). It catalyses the reaction a 1,2-diacyl-sn-glycerol + ATP = a 1,2-diacyl-sn-glycero-3-phosphate + ADP + H(+). The enzyme catalyses an N-acylsphing-4-enine + ATP = an N-acylsphing-4-enine 1-phosphate + ADP + H(+). The catalysed reaction is 1,2-di-(9Z-octadecenoyl)-sn-glycerol + ATP = 1,2-di-(9Z-octadecenoyl)-sn-glycero-3-phosphate + ADP + H(+). It carries out the reaction 1-(9Z-octadecenoyl)-sn-glycerol + ATP = 1-(9Z-octadecenoyl)-sn-glycero-3-phosphate + ADP + H(+). It catalyses the reaction 1-(5Z,8Z,11Z,14Z-eicosatetraenoyl)-sn-glycerol + ATP = 1-(5Z,8Z,11Z,14Z-eicosatetraenoyl)-sn-glycero-3-phosphate + ADP + H(+). The enzyme catalyses a 1-acyl-sn-glycerol + ATP = a 1-acyl-sn-glycero-3-phosphate + ADP + H(+). The catalysed reaction is 1-hexadecanoyl-sn-glycerol + ATP = 1-hexadecanoyl-sn-glycero-3-phosphate + ADP + H(+). It carries out the reaction a 2-acylglycerol + ATP = a 2-acyl-sn-glycerol 3-phosphate + ADP + H(+). It catalyses the reaction 2-(5Z,8Z,11Z,14Z-eicosatetraenoyl)-glycerol + ATP = 2-(5Z,8Z,11Z,14Z-eicosatetraenoyl)-sn-glycero-3-phosphate + ADP + H(+). The enzyme catalyses N-(hexanoyl)sphing-4-enine + ATP = N-hexanoylsphing-4-enine 1-phosphate + ADP + H(+). Its pathway is lipid metabolism; glycerolipid metabolism. With respect to regulation, both the ceramide and diacylglycerol kinase activities are inhibited by sphingosine and stimulated by cardiolipin. Both activities are stimulated by calcium when magnesium concentrations are low but inhibited by calcium when magnesium concentrations are high. Lipid kinase that can phosphorylate both monoacylglycerol and diacylglycerol to form lysophosphatidic acid (LPA) and phosphatidic acid (PA), respectively. Phosphorylates ceramide but not sphingosine. Phosphorylates 1,2-dioleoylglycerol more rapidly than 2,3-dioleoylglycerol. Independently of its lipid kinase activity, acts as a component of the TIM22 complex. The TIM22 complex mediates the import and insertion of multi-pass transmembrane proteins into the mitochondrial inner membrane by forming a twin-pore translocase that uses the membrane potential as the external driving force. In the TIM22 complex, required for the import of a subset of metabolite carriers into mitochondria, such as ANT1/SLC25A4 and SLC25A24, while it is not required for the import of TIMM23. Overexpression increases the formation and secretion of LPA, resulting in transactivation of EGFR and activation of the downstream MAPK signaling pathway, leading to increased cell growth. In Mus musculus (Mouse), this protein is Acylglycerol kinase, mitochondrial.